A 394-amino-acid polypeptide reads, in one-letter code: NAD(P)H-quinone oxidoreductase subunit H (394 aa).

This sequence belongs to the complex I 49 kDa subunit family. NDH-1 can be composed of about 15 different subunits; different subcomplexes with different compositions have been identified which probably have different functions.

The protein resides in the cellular thylakoid membrane. The catalysed reaction is a plastoquinone + NADH + (n+1) H(+)(in) = a plastoquinol + NAD(+) + n H(+)(out). The enzyme catalyses a plastoquinone + NADPH + (n+1) H(+)(in) = a plastoquinol + NADP(+) + n H(+)(out). NDH-1 shuttles electrons from an unknown electron donor, via FMN and iron-sulfur (Fe-S) centers, to quinones in the respiratory and/or the photosynthetic chain. The immediate electron acceptor for the enzyme in this species is believed to be plastoquinone. Couples the redox reaction to proton translocation, and thus conserves the redox energy in a proton gradient. Cyanobacterial NDH-1 also plays a role in inorganic carbon-concentration. This is NAD(P)H-quinone oxidoreductase subunit H from Acaryochloris marina (strain MBIC 11017).